The chain runs to 502 residues: Probable glycerol kinase (502 aa).

A substrate-binding site is contributed by T11. Residue R15 participates in ATP binding. Residues R85, Y140, and D246 each coordinate substrate. ATP contacts are provided by residues T268, G313, and 416-420; that span reads GMIAN.

The protein belongs to the FGGY kinase family.

It catalyses the reaction glycerol + ATP = sn-glycerol 3-phosphate + ADP + H(+). The protein operates within polyol metabolism; glycerol degradation via glycerol kinase pathway; sn-glycerol 3-phosphate from glycerol: step 1/1. The sequence is that of Probable glycerol kinase from Caenorhabditis elegans.